Consider the following 641-residue polypeptide: DNA primase (641 aa).

The segment at 41-65 adopts a CHC2-type zinc-finger fold; the sequence is CPFHDEKSPSFQVSPSKGFFHCFGC. In terms of domain architecture, Toprim spans 262–346; sequence SRAVVVEGYT…AAETYIAIAP (85 aa). Mg(2+)-binding residues include Glu-268, Asp-317, and Asp-319. Positions 444–478 are disordered; the sequence is RDRGGKGPAPDQRQRGGGPQQQAGPMTATPRGPAL.

This sequence belongs to the DnaG primase family. In terms of assembly, monomer. Interacts with DnaB. Zn(2+) is required as a cofactor. Mg(2+) serves as cofactor.

The enzyme catalyses ssDNA + n NTP = ssDNA/pppN(pN)n-1 hybrid + (n-1) diphosphate.. Its function is as follows. RNA polymerase that catalyzes the synthesis of short RNA molecules used as primers for DNA polymerase during DNA replication. The polypeptide is DNA primase (Streptomyces coelicolor (strain ATCC BAA-471 / A3(2) / M145)).